A 478-amino-acid chain; its full sequence is Vitronectin (478 aa).

Residues 1-19 form the signal peptide; the sequence is MAPLRPFFILALVAWVSLA. Residues 20–63 enclose the SMB domain; the sequence is DQESCKGRCTQGFMASKKCQCDELCTYYQSCCADYMEQCKPQVT. Disulfide bonds link cysteine 24–cysteine 28, cysteine 24–cysteine 40, cysteine 28–cysteine 58, cysteine 38–cysteine 40, cysteine 38–cysteine 51, cysteine 44–cysteine 50, and cysteine 51–cysteine 58. A Cell attachment site motif is present at residues 64–66; that stretch reads RGD. Threonine 69 carries the phosphothreonine modification. Sulfotyrosine is present on residues tyrosine 75, tyrosine 78, and tyrosine 80. Residues 82–153 are disordered; sequence EEPKNNTNTG…QGTPEFPEEE (72 aa). A glycan (N-linked (GlcNAc...) asparagine) is linked at asparagine 86. Polar residues predominate over residues 86 to 99; it reads NNTNTGVQPENTSP. Over residues 131-141 the composition is skewed to basic and acidic residues; sequence EQQEEILRPDT. Hemopexin repeat units lie at residues 157-201, 202-249, and 250-304; these read GKPF…VWGI, EGPI…FSGI, and PDNV…FEHF. Residues asparagine 168 and asparagine 241 are each glycosylated (N-linked (GlcNAc...) asparagine). A sulfotyrosine mark is found at tyrosine 278 and tyrosine 281. A disulfide bond links cysteine 292 and cysteine 431. 2 positions are modified to phosphoserine: serine 311 and serine 362. The disordered stretch occupies residues 359–395; sequence LSHSAQAKKQKSKRRSRKRYRSRRGRGHRRSQSSNSR. The segment covering 364–389 has biased composition (basic residues); it reads QAKKQKSKRRSRKRYRSRRGRGHRRS. The heparin-binding stretch occupies residues 366 to 399; the sequence is KKQKSKRRSRKRYRSRRGRGHRRSQSSNSRRSSR. Serine 398 carries the phosphoserine; by PKA modification. A sulfotyrosine mark is found at tyrosine 416, tyrosine 419, and tyrosine 421. A Hemopexin 4 repeat occupies 420 to 473; that stretch reads DYDMDWLVPATCEPIQSVYFFSGDKYYRVNLRTRRVDSVNPPYPRSIAQYWLGC.

Interacts with SERPINE1/PAI1, insulin and C1QBP. Post-translationally, sulfated on tyrosine residues. In terms of processing, N- and O-glycosylated. It has been suggested that the active SMB domain may be permitted considerable disulfide bond heterogeneity or variability, thus two alternate disulfide patterns based on 3D structures are described with 1 disulfide bond conserved in both. Plasma.

The protein localises to the secreted. It is found in the extracellular space. In terms of biological role, vitronectin is a cell adhesion and spreading factor found in serum and tissues. Vitronectin interact with glycosaminoglycans and proteoglycans. Is recognized by certain members of the integrin family and serves as a cell-to-substrate adhesion molecule. Inhibitor of the membrane-damaging effect of the terminal cytolytic complement pathway. The polypeptide is Vitronectin (Vtn) (Mus musculus (Mouse)).